We begin with the raw amino-acid sequence, 94 residues long: Pyrimidine/purine nucleoside phosphorylase (94 aa).

The protein belongs to the nucleoside phosphorylase PpnP family.

The enzyme catalyses a purine D-ribonucleoside + phosphate = a purine nucleobase + alpha-D-ribose 1-phosphate. It catalyses the reaction adenosine + phosphate = alpha-D-ribose 1-phosphate + adenine. It carries out the reaction cytidine + phosphate = cytosine + alpha-D-ribose 1-phosphate. The catalysed reaction is guanosine + phosphate = alpha-D-ribose 1-phosphate + guanine. The enzyme catalyses inosine + phosphate = alpha-D-ribose 1-phosphate + hypoxanthine. It catalyses the reaction thymidine + phosphate = 2-deoxy-alpha-D-ribose 1-phosphate + thymine. It carries out the reaction uridine + phosphate = alpha-D-ribose 1-phosphate + uracil. The catalysed reaction is xanthosine + phosphate = alpha-D-ribose 1-phosphate + xanthine. Its function is as follows. Catalyzes the phosphorolysis of diverse nucleosides, yielding D-ribose 1-phosphate and the respective free bases. Can use uridine, adenosine, guanosine, cytidine, thymidine, inosine and xanthosine as substrates. Also catalyzes the reverse reactions. The polypeptide is Pyrimidine/purine nucleoside phosphorylase (Aeromonas salmonicida (strain A449)).